The following is a 462-amino-acid chain: Indoleacetamide hydrolase (462 aa).

Active-site charge relay system residues include K74 and S149. S173 functions as the Acyl-ester intermediate in the catalytic mechanism.

Belongs to the amidase family.

Its pathway is plant hormone metabolism; auxin biosynthesis. Its function is as follows. Hydrolyzes indole-3-acetamide (IAM) into indole-3-acetic acid (IAA). The polypeptide is Indoleacetamide hydrolase (iaaH) (Allorhizobium ampelinum (strain ATCC BAA-846 / DSM 112012 / S4) (Agrobacterium vitis (strain S4))).